The chain runs to 610 residues: Methionine--tRNA ligase (610 aa).

The 'HIGH' region motif lies at 12–22; that stretch reads PYANGPRHIGH. Positions 144, 147, 157, and 160 each coordinate Zn(2+). A 'KMSKS' region motif is present at residues 348-352; it reads KFSSS. Serine 351 provides a ligand contact to ATP.

Belongs to the class-I aminoacyl-tRNA synthetase family. MetG type 1 subfamily. Monomer. The cofactor is Zn(2+).

The protein resides in the cytoplasm. The catalysed reaction is tRNA(Met) + L-methionine + ATP = L-methionyl-tRNA(Met) + AMP + diphosphate. Functionally, is required not only for elongation of protein synthesis but also for the initiation of all mRNA translation through initiator tRNA(fMet) aminoacylation. This is Methionine--tRNA ligase from Corynebacterium glutamicum (strain R).